We begin with the raw amino-acid sequence, 241 residues long: Fatty acid metabolism regulator protein (241 aa).

The region spanning 11-79 (QSPAALAEEY…HGKPTKVNNI (69 aa)) is the HTH gntR-type domain. A DNA-binding region (H-T-H motif) is located at residues 39-58 (ERDLADKIGVTRTTLREVLQ).

Homodimer.

It localises to the cytoplasm. In terms of biological role, multifunctional regulator of fatty acid metabolism. The sequence is that of Fatty acid metabolism regulator protein from Haemophilus influenzae (strain 86-028NP).